Here is a 188-residue protein sequence, read N- to C-terminus: Defensin-like protein 99 (188 aa).

The N-terminal stretch at 1–28 (MGSLKLSTVVVTALVVCLSILLISPTEA) is a signal peptide. 7 disulfide bridges follow: Cys-37-Cys-95, Cys-45-Cys-77, Cys-58-Cys-92, Cys-62-Cys-94, Cys-123-Cys-178, Cys-137-Cys-175, and Cys-141-Cys-177.

Belongs to the DEFL family.

It is found in the secreted. The polypeptide is Defensin-like protein 99 (Arabidopsis thaliana (Mouse-ear cress)).